The following is a 657-amino-acid chain: tRNA 5-methylaminomethyl-2-thiouridine biosynthesis bifunctional protein MnmC (657 aa).

The tract at residues 1-236 (MPDRLVPATL…KRAMLVGEYA (236 aa)) is tRNA (mnm(5)s(2)U34)-methyltransferase. The interval 261-657 (IGAGVAGCAV…LRARQVSAAD (397 aa)) is FAD-dependent cmnm(5)s(2)U34 oxidoreductase.

In the N-terminal section; belongs to the methyltransferase superfamily. tRNA (mnm(5)s(2)U34)-methyltransferase family. The protein in the C-terminal section; belongs to the DAO family. Requires FAD as cofactor.

Its subcellular location is the cytoplasm. It carries out the reaction 5-aminomethyl-2-thiouridine(34) in tRNA + S-adenosyl-L-methionine = 5-methylaminomethyl-2-thiouridine(34) in tRNA + S-adenosyl-L-homocysteine + H(+). In terms of biological role, catalyzes the last two steps in the biosynthesis of 5-methylaminomethyl-2-thiouridine (mnm(5)s(2)U) at the wobble position (U34) in tRNA. Catalyzes the FAD-dependent demodification of cmnm(5)s(2)U34 to nm(5)s(2)U34, followed by the transfer of a methyl group from S-adenosyl-L-methionine to nm(5)s(2)U34, to form mnm(5)s(2)U34. This chain is tRNA 5-methylaminomethyl-2-thiouridine biosynthesis bifunctional protein MnmC, found in Burkholderia multivorans (strain ATCC 17616 / 249).